A 77-amino-acid polypeptide reads, in one-letter code: Acyl carrier protein (77 aa).

One can recognise a Carrier domain in the interval 1-76 (MAVFDDVRDV…DVVNYIEKLG (76 aa)). Position 36 is an O-(pantetheine 4'-phosphoryl)serine (serine 36).

The protein belongs to the acyl carrier protein (ACP) family. Post-translationally, 4'-phosphopantetheine is transferred from CoA to a specific serine of apo-ACP by AcpS. This modification is essential for activity because fatty acids are bound in thioester linkage to the sulfhydryl of the prosthetic group.

Its subcellular location is the cytoplasm. Its pathway is lipid metabolism; fatty acid biosynthesis. Its function is as follows. Carrier of the growing fatty acid chain in fatty acid biosynthesis. This is Acyl carrier protein from Campylobacter curvus (strain 525.92).